Reading from the N-terminus, the 615-residue chain is Dihydroxy-acid dehydratase (615 aa).

Aspartate 81 contacts Mg(2+). Cysteine 122 contacts [2Fe-2S] cluster. Mg(2+) contacts are provided by aspartate 123 and lysine 124. Lysine 124 carries the post-translational modification N6-carboxylysine. A [2Fe-2S] cluster-binding site is contributed by cysteine 195. Glutamate 491 contributes to the Mg(2+) binding site. Serine 517 acts as the Proton acceptor in catalysis.

Belongs to the IlvD/Edd family. Homodimer. [2Fe-2S] cluster is required as a cofactor. It depends on Mg(2+) as a cofactor.

It catalyses the reaction (2R)-2,3-dihydroxy-3-methylbutanoate = 3-methyl-2-oxobutanoate + H2O. The enzyme catalyses (2R,3R)-2,3-dihydroxy-3-methylpentanoate = (S)-3-methyl-2-oxopentanoate + H2O. It participates in amino-acid biosynthesis; L-isoleucine biosynthesis; L-isoleucine from 2-oxobutanoate: step 3/4. The protein operates within amino-acid biosynthesis; L-valine biosynthesis; L-valine from pyruvate: step 3/4. Functionally, functions in the biosynthesis of branched-chain amino acids. Catalyzes the dehydration of (2R,3R)-2,3-dihydroxy-3-methylpentanoate (2,3-dihydroxy-3-methylvalerate) into 2-oxo-3-methylpentanoate (2-oxo-3-methylvalerate) and of (2R)-2,3-dihydroxy-3-methylbutanoate (2,3-dihydroxyisovalerate) into 2-oxo-3-methylbutanoate (2-oxoisovalerate), the penultimate precursor to L-isoleucine and L-valine, respectively. This is Dihydroxy-acid dehydratase from Shewanella pealeana (strain ATCC 700345 / ANG-SQ1).